We begin with the raw amino-acid sequence, 108 residues long: Transmembrane protein 265 (108 aa).

Transmembrane regions (helical) follow at residues 34-54 (AATS…VFAI) and 78-98 (LILA…LLLW).

The protein belongs to the CD225/Dispanin family.

It is found in the membrane. The polypeptide is Transmembrane protein 265 (Homo sapiens (Human)).